The sequence spans 121 residues: uncharacterized protein (121 aa).

This sequence to M.jannaschii MJ0989.

This is an uncharacterized protein from Methanopyrus kandleri (strain AV19 / DSM 6324 / JCM 9639 / NBRC 100938).